Here is a 429-residue protein sequence, read N- to C-terminus: MREINSLVVVGSQWGDEGKGKMTDYFAQKADVVVRFAGGDNAGHVINFNGQKHKVTIIPSGIFNSEVTSVIGNGCAVNLINLVKELETIKNSGVKLGKLLISDRAQLILPYHILIDGAQEESRGARKIGTTKRGIGPTYQDKAARLGIRVADIEEEDFKETFKEIFEYQMMFLDRMFNVESIDFEETYANLINAYNVIKDCVTDTGIFVEQAIKNGKKVLFEGAQGALLDIDHGTYPYVTSSNTSANNASTGTGISHKLINNTLGVVKAYSTRVGAGAFPTELLNEVGDGIRERGHEYGSNTKRPRRVGWLDLVALKHAIRTSGIDYLFITLLDVLSGVEELLICDKYILNGEEINYIPATSSKHEKCKANYISMPGWKEDITKVKHFEELPLNAKNYLNKIAEICEVEISGFSVGPDRLQTVITKEIM.

GTP-binding positions include G15 to K21 and G43 to V45. The active-site Proton acceptor is the D16. The Mg(2+) site is built by D16 and G43. Residues D16–K19, N41–H44, T131, R145, Q225, T240, and R304 each bind IMP. The active-site Proton donor is the H44. Residue S300–R306 coordinates substrate. GTP contacts are provided by residues R306, L332 to D334, and S414 to G416.

It belongs to the adenylosuccinate synthetase family. As to quaternary structure, homodimer. Mg(2+) serves as cofactor.

Its subcellular location is the cytoplasm. The enzyme catalyses IMP + L-aspartate + GTP = N(6)-(1,2-dicarboxyethyl)-AMP + GDP + phosphate + 2 H(+). Its pathway is purine metabolism; AMP biosynthesis via de novo pathway; AMP from IMP: step 1/2. Its function is as follows. Plays an important role in the de novo pathway of purine nucleotide biosynthesis. Catalyzes the first committed step in the biosynthesis of AMP from IMP. This Mesoplasma florum (strain ATCC 33453 / NBRC 100688 / NCTC 11704 / L1) (Acholeplasma florum) protein is Adenylosuccinate synthetase.